The sequence spans 341 residues: Tetraacyldisaccharide 4'-kinase (341 aa).

54–61 (TVGGAGKT) is a binding site for ATP.

It belongs to the LpxK family.

The catalysed reaction is a lipid A disaccharide + ATP = a lipid IVA + ADP + H(+). It participates in glycolipid biosynthesis; lipid IV(A) biosynthesis; lipid IV(A) from (3R)-3-hydroxytetradecanoyl-[acyl-carrier-protein] and UDP-N-acetyl-alpha-D-glucosamine: step 6/6. Its function is as follows. Transfers the gamma-phosphate of ATP to the 4'-position of a tetraacyldisaccharide 1-phosphate intermediate (termed DS-1-P) to form tetraacyldisaccharide 1,4'-bis-phosphate (lipid IVA). The protein is Tetraacyldisaccharide 4'-kinase of Brucella anthropi (strain ATCC 49188 / DSM 6882 / CCUG 24695 / JCM 21032 / LMG 3331 / NBRC 15819 / NCTC 12168 / Alc 37) (Ochrobactrum anthropi).